A 229-amino-acid polypeptide reads, in one-letter code: Uracil-DNA glycosylase (229 aa).

Residue D67 is the Proton acceptor of the active site.

This sequence belongs to the uracil-DNA glycosylase (UDG) superfamily. UNG family.

The protein resides in the cytoplasm. The enzyme catalyses Hydrolyzes single-stranded DNA or mismatched double-stranded DNA and polynucleotides, releasing free uracil.. Functionally, excises uracil residues from the DNA which can arise as a result of misincorporation of dUMP residues by DNA polymerase or due to deamination of cytosine. The polypeptide is Uracil-DNA glycosylase (Coxiella burnetii (strain CbuG_Q212) (Coxiella burnetii (strain Q212))).